The following is a 354-amino-acid chain: RH-like protein (354 aa).

Helical transmembrane passes span 11-31 (GCLP…FFFF), 45-65 (VATY…LGFL), 77-97 (VAFN…LDGF), 125-145 (ISVG…MVLV), 167-187 (VNIM…AWCL), 209-229 (AMLG…ALLT), 238-258 (VFNT…VSSL), and 287-307 (LISS…ISIG).

This sequence belongs to the ammonium transporter (TC 2.A.49) family. Rh subfamily.

It is found in the membrane. Functionally, may be part of an oligomeric complex which is likely to have a transport or channel function in the erythrocyte membrane. This Hylobates pileatus (Pileated gibbon) protein is RH-like protein.